The chain runs to 21 residues: Putative pancreatic polypeptide 2 (21 aa).

It belongs to the NPY family.

The protein is Putative pancreatic polypeptide 2 (PPY2P) of Homo sapiens (Human).